The primary structure comprises 248 residues: Myelin protein P0 (248 aa).

A signal peptide spans 1 to 29; it reads MAPGAPSSSPSPILAALLFSSLVLSPALA. One can recognise an Ig-like V-type domain in the interval 30–143; sequence IVVYTDREIY…DIVGKTSQVT (114 aa). Residues 30 to 153 lie on the Extracellular side of the membrane; the sequence is IVVYTDREIY…LYVFEKVPTR (124 aa). A disulfide bridge connects residues Cys50 and Cys127. N-linked (GlcNAc...) (complex) asparagine glycosylation occurs at Asn122. The chain crosses the membrane as a helical span at residues 154-179; the sequence is YGVVLGAVIGGILGVVLLLLLLFYLI. The Cytoplasmic portion of the chain corresponds to 180-248; the sequence is RYCWLRRQAA…GLGESRKDKK (69 aa). Phosphoserine; by PKC is present on Ser210. The segment at 222 to 248 is disordered; that stretch reads MLDHSRSTKAASEKKSKGLGESRKDKK. A compositionally biased stretch (basic and acidic residues) spans 224–248; the sequence is DHSRSTKAASEKKSKGLGESRKDKK. Phosphoserine occurs at positions 226 and 228. At Ser233 the chain carries Phosphoserine; by PKC. A phosphoserine mark is found at Ser237 and Ser243.

The protein belongs to the myelin P0 protein family. In terms of assembly, homodimer and homotetramer. In terms of processing, N-glycosylated; contains sulfate-substituted glycan. As to expression, found only in peripheral nervous system Schwann cells.

Its subcellular location is the cell membrane. Is an adhesion molecule necessary for normal myelination in the peripheral nervous system. It mediates adhesion between adjacent myelin wraps and ultimately drives myelin compaction. The chain is Myelin protein P0 (Mpz) from Mus musculus (Mouse).